A 131-amino-acid polypeptide reads, in one-letter code: Transcription antitermination protein NusB (131 aa).

It belongs to the NusB family.

In terms of biological role, involved in transcription antitermination. Required for transcription of ribosomal RNA (rRNA) genes. Binds specifically to the boxA antiterminator sequence of the ribosomal RNA (rrn) operons. In Aliarcobacter butzleri (strain RM4018) (Arcobacter butzleri), this protein is Transcription antitermination protein NusB.